The primary structure comprises 488 residues: Multidrug resistance outer membrane protein MdtP (488 aa).

Positions 1 to 23 are cleaved as a signal peptide; it reads MINRQLSRLLLCSILGSTTLISG. The N-palmitoyl cysteine moiety is linked to residue cysteine 24. Cysteine 24 carries S-diacylglycerol cysteine lipidation.

Belongs to the outer membrane factor (OMF) (TC 1.B.17) family. In terms of assembly, could be part of a tripartite efflux system composed of MdtN, MdtO and MdtP.

The protein localises to the cell outer membrane. In terms of biological role, could be involved in resistance to puromycin, acriflavine and tetraphenylarsonium chloride. The chain is Multidrug resistance outer membrane protein MdtP (mdtP) from Escherichia coli O6:H1 (strain CFT073 / ATCC 700928 / UPEC).